A 479-amino-acid polypeptide reads, in one-letter code: F-box protein At5g51380 (479 aa).

Residues 1 to 20 (MTFREKMPTSPKSPLRRRRS) form a disordered region. An F-box domain is found at 62 to 108 (DRTLSLSDSLLLKILEKLPESQNEDVSLVCKRWLSVQGRRLRSMKVF).

The protein is F-box protein At5g51380 of Arabidopsis thaliana (Mouse-ear cress).